Here is a 354-residue protein sequence, read N- to C-terminus: MDMMLLVQGACCSNQWLAAVLLSLCCLLPSCLPAGQSVDFPWAAVDNMMVRKGDTAVLRCYLEDGASKGAWLNRSSIIFAGGDKWSVDPRVSISTLNKRDYSLQIQNVDVTDDGPYTCSVQTQHTPRTMQVHLTVQVPPKIYDISNDMTVNEGTNVTLTCLATGKPEPSISWRHISPSAKPFENGQYLDIYGITRDQAGEYECSAENDVSFPDVRKVKVVVNFAPTIQEIKSGTVTPGRSGLIRCEGAGVPPPAFEWYKGEKKLFNGQQGIIIQNFSTRSILTVTNVTQEHFGNYTCVAANKLGTTNASLPLNPPSTAQYGITGSADVLFSCWYLVLTLSSFTSIFYLKNAILQ.

A signal peptide spans 1–37 (MDMMLLVQGACCSNQWLAAVLLSLCCLLPSCLPAGQS). Ig-like C2-type domains follow at residues 38–134 (VDFP…VHLT), 139–221 (PKIY…KVVV), and 225–313 (PTIQ…LPLN). C60 and C118 are joined by a disulfide. Residues N73 and N155 are each glycosylated (N-linked (GlcNAc...) asparagine). 2 cysteine pairs are disulfide-bonded: C160/C203 and C245/C297. Y187 bears the Phosphotyrosine mark. N-linked (GlcNAc...) asparagine glycosylation is found at N275, N286, N294, and N307. G324 carries GPI-anchor amidated glycine lipidation. A propeptide spans 325 to 354 (SADVLFSCWYLVLTLSSFTSIFYLKNAILQ) (removed in mature form).

The protein belongs to the immunoglobulin superfamily. IgLON family.

Its subcellular location is the cell membrane. Functionally, may be involved in cell-adhesion. May function as a trans-neural growth-promoting factor in regenerative axon sprouting in the mammalian brain. The sequence is that of Neuronal growth regulator 1 (NEGR1) from Homo sapiens (Human).